A 141-amino-acid chain; its full sequence is HTH-type transcriptional repressor NsrR (141 aa).

The HTH rrf2-type domain occupies 2 to 129 (QLTSFTDYGL…DNYTLADMVK (128 aa)). A DNA-binding region (H-T-H motif) is located at residues 28–51 (ISQVTEVYGVSRNHMVKIINQLSR). [2Fe-2S] cluster is bound by residues cysteine 91, cysteine 96, and cysteine 102.

Requires [2Fe-2S] cluster as cofactor.

Its function is as follows. Nitric oxide-sensitive repressor of genes involved in protecting the cell against nitrosative stress. May require iron for activity. This is HTH-type transcriptional repressor NsrR from Yersinia pseudotuberculosis serotype O:1b (strain IP 31758).